The chain runs to 181 residues: Large ribosomal subunit protein uL5 (181 aa).

The protein belongs to the universal ribosomal protein uL5 family. In terms of assembly, part of the 50S ribosomal subunit; part of the 5S rRNA/L5/L18/L25 subcomplex. Contacts the 5S rRNA and the P site tRNA. Forms a bridge to the 30S subunit in the 70S ribosome.

Functionally, this is one of the proteins that bind and probably mediate the attachment of the 5S RNA into the large ribosomal subunit, where it forms part of the central protuberance. In the 70S ribosome it contacts protein S13 of the 30S subunit (bridge B1b), connecting the 2 subunits; this bridge is implicated in subunit movement. Contacts the P site tRNA; the 5S rRNA and some of its associated proteins might help stabilize positioning of ribosome-bound tRNAs. This chain is Large ribosomal subunit protein uL5, found in Helicobacter hepaticus (strain ATCC 51449 / 3B1).